A 135-amino-acid polypeptide reads, in one-letter code: uncharacterized protein (135 aa).

This is an uncharacterized protein from Bacillus subtilis (strain 168).